A 941-amino-acid chain; its full sequence is Zinc finger protein 507 (941 aa).

At Ser95 the chain carries Phosphoserine. 2 consecutive C2H2-type zinc fingers follow at residues 122–144 (YQCS…VKQH) and 152–175 (LMCS…VSEH). The segment covering 165–177 (QELEAHVVSEHEN) has biased composition (basic and acidic residues). The tract at residues 165 to 198 (QELEAHVVSEHENSASSQARSSPSGQGATERKSE) is disordered. Low complexity predominate over residues 178–192 (SASSQARSSPSGQGA). Residues 237-259 (YRCLFCSYTCGQQRMLKTHAWKH) form a C2H2-type 3 zinc finger. Ser415 bears the Phosphoserine mark. The interval 455 to 477 (ELSKGLAPDENAPPGRRRTNSES) is disordered. C2H2-type zinc fingers lie at residues 630-652 (YRCR…LRVH), 658-680 (YQCP…MINH), 686-709 (HQCK…REQH), 746-768 (YRCD…RRVH), and 774-796 (YRCS…MWKH). The disordered stretch occupies residues 823-856 (GKSRGKPLLTSSEERTGPTTGSPENLVSSSELTS). The span at 839 to 856 (GPTTGSPENLVSSSELTS) shows a compositional bias: polar residues. A C2H2-type 9 zinc finger spans residues 899 to 921 (FCCCICGFESTSKESLLDHMKEH).

The protein belongs to the krueppel C2H2-type zinc-finger protein family.

The protein resides in the nucleus. Its function is as follows. May be involved in transcriptional regulation. The sequence is that of Zinc finger protein 507 (Znf507) from Mus musculus (Mouse).